The following is a 378-amino-acid chain: Cytochrome b (378 aa).

Transmembrane regions (helical) follow at residues 34–54 (FGSL…FLAM), 78–99 (WFLR…FIHV), 114–134 (WMIG…GYVL), and 179–199 (FFTF…IHLL). Residues His-84 and His-98 each coordinate heme b. His-183 and His-197 together coordinate heme b. His-202 lines the a ubiquinone pocket. The next 4 membrane-spanning stretches (helical) occupy residues 227–247 (YKDI…IWKF), 289–309 (LGGV…PFTH), 321–341 (LNQI…WIGA), and 348–368 (YVLT…INPL).

The protein belongs to the cytochrome b family. The main subunits of complex b-c1 are: cytochrome b, cytochrome c1 and the Rieske protein. Requires heme b as cofactor.

Its subcellular location is the mitochondrion inner membrane. Component of the ubiquinol-cytochrome c reductase complex (complex III or cytochrome b-c1 complex) that is part of the mitochondrial respiratory chain. The b-c1 complex mediates electron transfer from ubiquinol to cytochrome c. Contributes to the generation of a proton gradient across the mitochondrial membrane that is then used for ATP synthesis. This Aedes aegypti (Yellowfever mosquito) protein is Cytochrome b.